The sequence spans 386 residues: Succinate--CoA ligase [ADP-forming] subunit beta (386 aa).

The region spanning 9–244 (KQVLRSSNLN…DSQIDAKEAA (236 aa)) is the ATP-grasp domain. ATP contacts are provided by residues lysine 46, 53–55 (GRG), glutamate 99, leucine 102, and glutamate 107. Positions 199 and 213 each coordinate Mg(2+). Substrate is bound by residues asparagine 264 and 321-323 (GIV).

It belongs to the succinate/malate CoA ligase beta subunit family. As to quaternary structure, heterotetramer of two alpha and two beta subunits. It depends on Mg(2+) as a cofactor.

It carries out the reaction succinate + ATP + CoA = succinyl-CoA + ADP + phosphate. It catalyses the reaction GTP + succinate + CoA = succinyl-CoA + GDP + phosphate. Its pathway is carbohydrate metabolism; tricarboxylic acid cycle; succinate from succinyl-CoA (ligase route): step 1/1. Functionally, succinyl-CoA synthetase functions in the citric acid cycle (TCA), coupling the hydrolysis of succinyl-CoA to the synthesis of either ATP or GTP and thus represents the only step of substrate-level phosphorylation in the TCA. The beta subunit provides nucleotide specificity of the enzyme and binds the substrate succinate, while the binding sites for coenzyme A and phosphate are found in the alpha subunit. The protein is Succinate--CoA ligase [ADP-forming] subunit beta of Thiobacillus denitrificans (strain ATCC 25259 / T1).